We begin with the raw amino-acid sequence, 35 residues long: Alpha-amanitin proprotein 1 (35 aa).

Positions 1-10 (MFDTNATRLP) are excised as a propeptide. Position 11 is a (3R,4R)-4,5-dihydroxyisoleucine; in form alpha-amanitin (I11). I11 carries the post-translational modification (3R,4S)-4-hydroxyisoleucine; in form gamma-amanitin. The cyclopeptide (Ile-Pro) cross-link spans 11-18 (IWGIGCNP). A cross-link (2'-cysteinyl-6'-hydroxytryptophan sulfoxide (Trp-Cys)) is located at residues 12 to 16 (WGIGC). P18 is subject to 4-hydroxyproline. The propeptide occupies 19 to 35 (WTAEHVDQTLASGNDIC).

The protein belongs to the MSDIN fungal toxin family. Post-translationally, processed by the macrocyclase-peptidase enzyme POPB to yield a toxic bicyclic octapeptide. POPB first removes 10 residues from the N-terminus. Conformational trapping of the remaining peptide forces the enzyme to release this intermediate rather than proceed to macrocyclization. The enzyme rebinds the remaining peptide in a different conformation and catalyzes macrocyclization of the N-terminal 8 residues.

In terms of biological role, major toxin belonging to the bicyclic octapeptides amatoxins that acts by binding non-competitively to RNA polymerase II and greatly slowing the elongation of transcripts from target promoters. The protein is Alpha-amanitin proprotein 1 of Galerina marginata (strain CBS 339.88).